Consider the following 366-residue polypeptide: Zinc finger protein ubi-d4 B (366 aa).

Disordered stretches follow at residues 41–94 and 140–167; these read ASAP…DGSS and DDLD…IGGA. The segment covering 76 to 86 has biased composition (basic and acidic residues); sequence PDPEQMLKKEG. Acidic residues predominate over residues 140-149; it reads DDLDDEDYEE. The C2H2-type zinc-finger motif lies at 183–206; it reads YACDICGKRYKNRPGLSYHYAHSH. Residues 211-243 are disordered; sequence EGAGAEDKEDSQPPTPIMHRSEEQKSKKGPDGL. Basic and acidic residues predominate over residues 229–240; sequence HRSEEQKSKKGP. 2 PHD-type zinc fingers span residues 247–307 and 304–354; these read NNYC…CKCC and CKCC…CLDL.

Belongs to the requiem/DPF family.

The protein resides in the cytoplasm. Its subcellular location is the nucleus. In terms of biological role, may be a transcription factor required for the apoptosis response following survival factor withdrawal from myeloid cells. Might also have a role in the development and maturation of lymphoid cells. The sequence is that of Zinc finger protein ubi-d4 B (req-b) from Xenopus laevis (African clawed frog).